Consider the following 404-residue polypeptide: Cysteine desulfurase IscS (404 aa).

Residues 75 to 76, N155, Q183, and 203 to 205 contribute to the pyridoxal 5'-phosphate site; these read AT and SGH. K206 bears the N6-(pyridoxal phosphate)lysine mark. Residue T243 coordinates pyridoxal 5'-phosphate. C328 (cysteine persulfide intermediate) is an active-site residue. C328 contacts [2Fe-2S] cluster.

This sequence belongs to the class-V pyridoxal-phosphate-dependent aminotransferase family. NifS/IscS subfamily. In terms of assembly, homodimer. Forms a heterotetramer with IscU, interacts with other sulfur acceptors. Requires pyridoxal 5'-phosphate as cofactor.

The protein resides in the cytoplasm. The enzyme catalyses (sulfur carrier)-H + L-cysteine = (sulfur carrier)-SH + L-alanine. Its pathway is cofactor biosynthesis; iron-sulfur cluster biosynthesis. Master enzyme that delivers sulfur to a number of partners involved in Fe-S cluster assembly, tRNA modification or cofactor biosynthesis. Catalyzes the removal of elemental sulfur and selenium atoms from cysteine and selenocysteine to produce alanine. Functions as a sulfur delivery protein for Fe-S cluster synthesis onto IscU, an Fe-S scaffold assembly protein, as well as other S acceptor proteins. Also functions as a selenium delivery protein in the pathway for the biosynthesis of selenophosphate. This Escherichia coli (strain K12 / DH10B) protein is Cysteine desulfurase IscS.